The sequence spans 242 residues: DNA repair protein RecO (242 aa).

The protein belongs to the RecO family. In terms of assembly, monomer.

Its function is as follows. Involved in DNA repair and RecF pathway recombination. The protein is DNA repair protein RecO of Salmonella gallinarum (strain 287/91 / NCTC 13346).